Here is a 57-residue protein sequence, read N- to C-terminus: Potassium channel toxin alpha-KTx 26.3 (57 aa).

The N-terminal stretch at 1-15 (MSGLSVFILIALVLS) is a signal peptide. The propeptide occupies 16 to 24 (VIIDVLNNS). Cystine bridges form between Cys30/Cys48, Cys34/Cys53, and Cys38/Cys55.

This sequence belongs to the short scorpion toxin superfamily. Potassium channel inhibitor family. Alpha-KTx 26 subfamily. Expressed by the venom gland.

The protein localises to the secreted. Functionally, recombinant toxin that reversibly inhibits the potassium current of mKv1.3/KCNA3 channel stably expressed in COS7 cells (IC(50)=150 nM). This is Potassium channel toxin alpha-KTx 26.3 from Mesobuthus gibbosus (Mediterranean checkered scorpion).